We begin with the raw amino-acid sequence, 315 residues long: Methionyl-tRNA formyltransferase (315 aa).

113 to 116 (SLLP) provides a ligand contact to (6S)-5,6,7,8-tetrahydrofolate.

The protein belongs to the Fmt family.

The enzyme catalyses L-methionyl-tRNA(fMet) + (6R)-10-formyltetrahydrofolate = N-formyl-L-methionyl-tRNA(fMet) + (6S)-5,6,7,8-tetrahydrofolate + H(+). Functionally, attaches a formyl group to the free amino group of methionyl-tRNA(fMet). The formyl group appears to play a dual role in the initiator identity of N-formylmethionyl-tRNA by promoting its recognition by IF2 and preventing the misappropriation of this tRNA by the elongation apparatus. The sequence is that of Methionyl-tRNA formyltransferase from Pectobacterium atrosepticum (strain SCRI 1043 / ATCC BAA-672) (Erwinia carotovora subsp. atroseptica).